The following is a 558-amino-acid chain: Nucleoprotein (558 aa).

Positions 54–237 (MRKERRDDKD…ITEQQSSINI (184 aa)) are binding site for the cap structure m7GTP. Mn(2+) is bound by residues Asp382 and Glu384. Zn(2+) is bound by residues Glu392, Cys499, His502, and Cys518. Asp522 lines the Mn(2+) pocket.

It belongs to the arenaviridae nucleocapsid protein family. As to quaternary structure, homomultimerizes to form the nucleocapsid. Binds to viral genomic RNA. Interacts with glycoprotein G2. Interacts with protein Z; this interaction probably directs the encapsidated genome to budding sites. Interacts with protein L; this interaction does not interfere with Z-L interaction. Interacts with host IKBKE (via Protein kinase domain); the interaction inhibits IKBKE kinase activity.

The protein localises to the virion. Its subcellular location is the host cytoplasm. In terms of biological role, encapsidates the genome, protecting it from nucleases. The encapsidated genomic RNA is termed the nucleocapsid (NC). Serves as template for viral transcription and replication. The increased presence of protein N in host cell does not seem to trigger the switch from transcription to replication as observed in other negative strain RNA viruses. Through the interaction with host IKBKE, strongly inhibits the phosphorylation and nuclear translocation of host IRF3, a protein involved in interferon activation pathway, leading to the inhibition of interferon-beta and IRF3-dependent promoters activation. Also encodes a functional 3'-5' exoribonuclease that degrades preferentially dsRNA substrates and thereby participates in the suppression of interferon induction. The chain is Nucleoprotein from Lymphocytic choriomeningitis virus (strain WE) (LCMV).